The primary structure comprises 726 residues: Catalase-peroxidase (726 aa).

The interval 1–33 (MSTSDDIHNTTATGKCPFHQGGHDQSAGAGTTT) is disordered. Positions 105–226 (WHGAGTYRSI…LGATEMGLIY (122 aa)) form a cross-link, tryptophyl-tyrosyl-methioninium (Trp-Tyr) (with M-252). Catalysis depends on His106, which acts as the Proton acceptor. The tryptophyl-tyrosyl-methioninium (Tyr-Met) (with W-105) cross-link spans 226 to 252 (YVNPEGPDHSGEPLSAAAAIRATFGNM). Position 267 (His267) interacts with heme b.

The protein belongs to the peroxidase family. Peroxidase/catalase subfamily. In terms of assembly, homodimer or homotetramer. The cofactor is heme b. Formation of the three residue Trp-Tyr-Met cross-link is important for the catalase, but not the peroxidase activity of the enzyme.

The catalysed reaction is H2O2 + AH2 = A + 2 H2O. It catalyses the reaction 2 H2O2 = O2 + 2 H2O. Functionally, bifunctional enzyme with both catalase and broad-spectrum peroxidase activity. The chain is Catalase-peroxidase from Shigella boydii serotype 18 (strain CDC 3083-94 / BS512).